Consider the following 573-residue polypeptide: Methionine--tRNA ligase (573 aa).

The 'HIGH' region motif lies at 10-20 (PYVNSVPHLGN). The Zn(2+) site is built by Cys-143, Cys-146, Cys-156, and Cys-159. The 'KMSKS' region motif lies at 333–337 (KFSKS). Position 336 (Lys-336) interacts with ATP.

Belongs to the class-I aminoacyl-tRNA synthetase family. MetG type 1 subfamily. It depends on Zn(2+) as a cofactor.

It localises to the cytoplasm. It catalyses the reaction tRNA(Met) + L-methionine + ATP = L-methionyl-tRNA(Met) + AMP + diphosphate. In terms of biological role, is required not only for elongation of protein synthesis but also for the initiation of all mRNA translation through initiator tRNA(fMet) aminoacylation. This is Methionine--tRNA ligase from Saccharolobus islandicus (strain M.14.25 / Kamchatka #1) (Sulfolobus islandicus).